The sequence spans 326 residues: Transcription cofactor vestigial-like protein 3 (326 aa).

The interval 54–82 (SLEVTLPSKQEEEEEEEEDEEEEEKDQPA) is disordered. Lys62 is covalently cross-linked (Glycyl lysine isopeptide (Lys-Gly) (interchain with G-Cter in SUMO2)). Over residues 64–78 (EEEEEEEEDEEEEEK) the composition is skewed to acidic residues. Lys129 participates in a covalent cross-link: Glycyl lysine isopeptide (Lys-Gly) (interchain with G-Cter in SUMO2). A disordered region spans residues 184–208 (TADPNSWPGHGLHQTGPAPPPTASE).

This sequence belongs to the vestigial family.

The protein localises to the nucleus. May act as a specific coactivator for the mammalian TEFs. The protein is Transcription cofactor vestigial-like protein 3 of Mus musculus (Mouse).